The chain runs to 412 residues: Glucose/galactose transporter (412 aa).

Transmembrane regions (helical) follow at residues 21 to 41 (YGFA…ITCL), 62 to 82 (LIQF…GQLV), 90 to 110 (GIVV…PAAS), 113 to 133 (VYAL…ILQV), 158 to 178 (FNSL…LSAA), 192 to 212 (FPYL…AILK), 239 to 259 (LGAI…SFLV), 310 to 330 (AFVA…IAMW), 331 to 351 (SVLA…SLAL), 363 to 383 (GILC…GALA), and 388 to 408 (IHLA…YGLI).

It belongs to the major facilitator superfamily. FHS transporter (TC 2.A.1.7) family.

It localises to the cell inner membrane. Intake of glucose and galactose. The protein is Glucose/galactose transporter (gluP) of Brucella abortus (strain 2308).